The sequence spans 328 residues: Ferredoxin--NADP reductase 2 (328 aa).

FAD contacts are provided by Glu-37, Gln-45, Tyr-50, Val-90, Phe-124, Asp-285, and Thr-325.

Belongs to the ferredoxin--NADP reductase type 2 family. In terms of assembly, homodimer. Requires FAD as cofactor.

The catalysed reaction is 2 reduced [2Fe-2S]-[ferredoxin] + NADP(+) + H(+) = 2 oxidized [2Fe-2S]-[ferredoxin] + NADPH. This is Ferredoxin--NADP reductase 2 from Latilactobacillus sakei subsp. sakei (strain 23K) (Lactobacillus sakei subsp. sakei).